The sequence spans 93 residues: Integration host factor subunit beta (93 aa).

This sequence belongs to the bacterial histone-like protein family. In terms of assembly, heterodimer of an alpha and a beta chain.

Functionally, this protein is one of the two subunits of integration host factor, a specific DNA-binding protein that functions in genetic recombination as well as in transcriptional and translational control. The sequence is that of Integration host factor subunit beta from Tolumonas auensis (strain DSM 9187 / NBRC 110442 / TA 4).